An 87-amino-acid chain; its full sequence is Small ribosomal subunit protein bS20 (87 aa).

It belongs to the bacterial ribosomal protein bS20 family.

Its function is as follows. Binds directly to 16S ribosomal RNA. This is Small ribosomal subunit protein bS20 from Finegoldia magna (strain ATCC 29328 / DSM 20472 / WAL 2508) (Peptostreptococcus magnus).